A 458-amino-acid chain; its full sequence is GTPase Der (458 aa).

2 consecutive EngA-type G domains span residues 9–171 (KTIA…DLNQ) and 197–368 (IQVG…ECFS). GTP-binding positions include 15–22 (GQPNVGKS), 62–66 (DTGGM), 123–126 (NKID), 203–210 (GRVNVGKS), 250–254 (DTAGI), and 314–317 (NKWD). The region spanning 369–453 (KRIPTSLLNS…PLILNAKDKK (85 aa)) is the KH-like domain.

It belongs to the TRAFAC class TrmE-Era-EngA-EngB-Septin-like GTPase superfamily. EngA (Der) GTPase family. In terms of assembly, associates with the 50S ribosomal subunit.

GTPase that plays an essential role in the late steps of ribosome biogenesis. The protein is GTPase Der of Helicobacter pylori (strain ATCC 700392 / 26695) (Campylobacter pylori).